Here is a 459-residue protein sequence, read N- to C-terminus: Ribulose bisphosphate carboxylase large chain (459 aa).

Substrate-binding residues include Asn98 and Thr148. Lys150 serves as the catalytic Proton acceptor. Lys152 lines the substrate pocket. Residues Lys176, Asp178, and Glu179 each contribute to the Mg(2+) site. The residue at position 176 (Lys176) is an N6-carboxylysine. His268 (proton acceptor) is an active-site residue. Residues Arg269, His301, and Ser353 each contribute to the substrate site.

It belongs to the RuBisCO large chain family. Type I subfamily. In terms of assembly, heterohexadecamer of 8 large chains and 8 small chains. Requires Mg(2+) as cofactor.

It is found in the plastid. The protein resides in the chloroplast. The enzyme catalyses 2 (2R)-3-phosphoglycerate + 2 H(+) = D-ribulose 1,5-bisphosphate + CO2 + H2O. It catalyses the reaction D-ribulose 1,5-bisphosphate + O2 = 2-phosphoglycolate + (2R)-3-phosphoglycerate + 2 H(+). Its function is as follows. RuBisCO catalyzes two reactions: the carboxylation of D-ribulose 1,5-bisphosphate, the primary event in carbon dioxide fixation, as well as the oxidative fragmentation of the pentose substrate in the photorespiration process. Both reactions occur simultaneously and in competition at the same active site. The chain is Ribulose bisphosphate carboxylase large chain (rbcL) from Calyptrosphaera sphaeroidea.